Reading from the N-terminus, the 199-residue chain is 3-isopropylmalate dehydratase small subunit (199 aa).

This sequence belongs to the LeuD family. LeuD type 1 subfamily. Heterodimer of LeuC and LeuD.

It catalyses the reaction (2R,3S)-3-isopropylmalate = (2S)-2-isopropylmalate. Its pathway is amino-acid biosynthesis; L-leucine biosynthesis; L-leucine from 3-methyl-2-oxobutanoate: step 2/4. Catalyzes the isomerization between 2-isopropylmalate and 3-isopropylmalate, via the formation of 2-isopropylmaleate. This chain is 3-isopropylmalate dehydratase small subunit, found in Aeromonas hydrophila subsp. hydrophila (strain ATCC 7966 / DSM 30187 / BCRC 13018 / CCUG 14551 / JCM 1027 / KCTC 2358 / NCIMB 9240 / NCTC 8049).